A 312-amino-acid chain; its full sequence is Protoheme IX farnesyltransferase (312 aa).

The next 9 membrane-spanning stretches (helical) occupy residues 29–49 (VMSL…GHMN), 50–70 (PVLA…SGAL), 90–110 (IPAG…LSAF), 117–137 (LMVN…YAVI), 150–170 (IVIG…AATG), 177–197 (LVLF…LSLF), 223–243 (ALFY…MGFA), 246–266 (FYGV…WRLW), and 292–312 (IFAV…FGVF).

The protein belongs to the UbiA prenyltransferase family. Protoheme IX farnesyltransferase subfamily.

It localises to the cell inner membrane. The catalysed reaction is heme b + (2E,6E)-farnesyl diphosphate + H2O = Fe(II)-heme o + diphosphate. The protein operates within porphyrin-containing compound metabolism; heme O biosynthesis; heme O from protoheme: step 1/1. Functionally, converts heme B (protoheme IX) to heme O by substitution of the vinyl group on carbon 2 of heme B porphyrin ring with a hydroxyethyl farnesyl side group. The sequence is that of Protoheme IX farnesyltransferase from Brucella melitensis biotype 1 (strain ATCC 23456 / CCUG 17765 / NCTC 10094 / 16M).